A 250-amino-acid polypeptide reads, in one-letter code: UPF0736 protein BLi01230/BL03322 (250 aa).

It belongs to the UPF0736 family.

In Bacillus licheniformis (strain ATCC 14580 / DSM 13 / JCM 2505 / CCUG 7422 / NBRC 12200 / NCIMB 9375 / NCTC 10341 / NRRL NRS-1264 / Gibson 46), this protein is UPF0736 protein BLi01230/BL03322.